A 147-amino-acid polypeptide reads, in one-letter code: HTH-type transcriptional regulator MgrA (147 aa).

One can recognise an HTH marR-type domain in the interval 8 to 139; that stretch reads KEQLCFSLYN…LNRLLGKVIH (132 aa). Positions 55–78 form a DNA-binding region, H-T-H motif; that stretch reads VKKVVTELALDTGTVSPLLKRMEQ.

Its subcellular location is the cytoplasm. Its function is as follows. Regulatory protein involved in autolytic activity, multidrug resistance and virulence. Controls autolysis by inactivating LytM, LytN (autolysins) and SarV (autolysis activator) and activating ArlRS, LrgAB and LytSR (autolysis inhibitors). Acts as a dual regulator for resistance to multiple drugs by inactivating NorB and tet38 and activating NorA. Positively controls the expression of virulence accessory gene regulator (agr) to promote alpha-hemolysin (hla) transcription and down-regulates staphylococcal accessory regulator (sarS), leading to repression of surface protein A (spa). Binds directly to hla promoter to augment its activation. Binds to sarS promoter to down-regulate spa expression. The protein is HTH-type transcriptional regulator MgrA (mgrA) of Staphylococcus aureus (strain NCTC 8325 / PS 47).